The sequence spans 448 residues: tRNA-2-methylthio-N(6)-dimethylallyladenosine synthase (448 aa).

The 118-residue stretch at 2–119 (KKLYIKTFGC…LSDLIAQRRK (118 aa)) folds into the MTTase N-terminal domain. Cys11, Cys48, Cys82, Cys156, Cys160, and Cys163 together coordinate [4Fe-4S] cluster. In terms of domain architecture, Radical SAM core spans 142–375 (RQTRGSAYVS…LALIEGQSNQ (234 aa)). The TRAM domain maps to 378-444 (QKMLGKTERV…NYTLRGELVE (67 aa)).

It belongs to the methylthiotransferase family. MiaB subfamily. Monomer. It depends on [4Fe-4S] cluster as a cofactor.

The protein localises to the cytoplasm. The enzyme catalyses N(6)-dimethylallyladenosine(37) in tRNA + (sulfur carrier)-SH + AH2 + 2 S-adenosyl-L-methionine = 2-methylsulfanyl-N(6)-dimethylallyladenosine(37) in tRNA + (sulfur carrier)-H + 5'-deoxyadenosine + L-methionine + A + S-adenosyl-L-homocysteine + 2 H(+). Its function is as follows. Catalyzes the methylthiolation of N6-(dimethylallyl)adenosine (i(6)A), leading to the formation of 2-methylthio-N6-(dimethylallyl)adenosine (ms(2)i(6)A) at position 37 in tRNAs that read codons beginning with uridine. The chain is tRNA-2-methylthio-N(6)-dimethylallyladenosine synthase from Polynucleobacter asymbioticus (strain DSM 18221 / CIP 109841 / QLW-P1DMWA-1) (Polynucleobacter necessarius subsp. asymbioticus).